Consider the following 821-residue polypeptide: Ent-pimara-8(14),15-diene synthase (821 aa).

Residues D556, D560, N701, T705, and E709 each coordinate Mg(2+). The DDXXD motif signature appears at 556–560 (DDFFD).

This sequence belongs to the terpene synthase family. It depends on Mg(2+) as a cofactor. In terms of tissue distribution, highly expressed in roots, at intermediate levels in stems and at lower levels in leaves.

The catalysed reaction is ent-copalyl diphosphate = ent-pimara-8(14),15-diene + diphosphate. It participates in secondary metabolite biosynthesis; terpenoid biosynthesis. Functionally, involved in the biosynthesis of ent-kaurene diterpenoids natural products. Catalyzes the conversion of ent-copalyl diphosphate to ent-pimara-8(14),15-diene. This is Ent-pimara-8(14),15-diene synthase from Oryza sativa subsp. japonica (Rice).